Reading from the N-terminus, the 122-residue chain is Large ribosomal subunit protein bL12 (122 aa).

This sequence belongs to the bacterial ribosomal protein bL12 family. As to quaternary structure, homodimer. Part of the ribosomal stalk of the 50S ribosomal subunit. Forms a multimeric L10(L12)X complex, where L10 forms an elongated spine to which 2 to 4 L12 dimers bind in a sequential fashion. Binds GTP-bound translation factors.

Forms part of the ribosomal stalk which helps the ribosome interact with GTP-bound translation factors. Is thus essential for accurate translation. The protein is Large ribosomal subunit protein bL12 of Actinobacillus pleuropneumoniae serotype 5b (strain L20).